The primary structure comprises 120 residues: NAD(P)H-quinone oxidoreductase subunit 3 (120 aa).

Transmembrane regions (helical) follow at residues 7–27, 64–84, and 89–109; these read YEYFLGFLLACSLVPILSLTA, MFALVFVVFDVETVFLYPWAV, and LGLLAFVEALIFIAILVVALV.

The protein belongs to the complex I subunit 3 family. As to quaternary structure, NDH-1 can be composed of about 15 different subunits; different subcomplexes with different compositions have been identified which probably have different functions.

Its subcellular location is the cellular thylakoid membrane. It carries out the reaction a plastoquinone + NADH + (n+1) H(+)(in) = a plastoquinol + NAD(+) + n H(+)(out). The catalysed reaction is a plastoquinone + NADPH + (n+1) H(+)(in) = a plastoquinol + NADP(+) + n H(+)(out). Functionally, NDH-1 shuttles electrons from an unknown electron donor, via FMN and iron-sulfur (Fe-S) centers, to quinones in the respiratory and/or the photosynthetic chain. The immediate electron acceptor for the enzyme in this species is believed to be plastoquinone. Couples the redox reaction to proton translocation, and thus conserves the redox energy in a proton gradient. Cyanobacterial NDH-1 also plays a role in inorganic carbon-concentration. The sequence is that of NAD(P)H-quinone oxidoreductase subunit 3 from Microcystis aeruginosa (strain NIES-843 / IAM M-2473).